We begin with the raw amino-acid sequence, 370 residues long: Aspartate-semialdehyde dehydrogenase 1 (370 aa).

NADP(+) contacts are provided by residues 9–12 (RGMV), 36–37 (TS), and Gln-72. Arg-101 provides a ligand contact to phosphate. The Acyl-thioester intermediate role is filled by Cys-134. An S-cysteinyl cysteine; in inhibited form modification is found at Cys-134. Gln-161 serves as a coordination point for substrate. Residues 164–165 (SG) and Pro-192 each bind NADP(+). Residue Glu-240 participates in substrate binding. Lys-243 serves as a coordination point for phosphate. Position 267 (Arg-267) interacts with substrate. The active-site Proton acceptor is His-274. Gln-350 provides a ligand contact to NADP(+).

Belongs to the aspartate-semialdehyde dehydrogenase family. As to quaternary structure, homodimer.

It carries out the reaction L-aspartate 4-semialdehyde + phosphate + NADP(+) = 4-phospho-L-aspartate + NADPH + H(+). The protein operates within amino-acid biosynthesis; L-lysine biosynthesis via DAP pathway; (S)-tetrahydrodipicolinate from L-aspartate: step 2/4. Its pathway is amino-acid biosynthesis; L-methionine biosynthesis via de novo pathway; L-homoserine from L-aspartate: step 2/3. It functions in the pathway amino-acid biosynthesis; L-threonine biosynthesis; L-threonine from L-aspartate: step 2/5. Inhibited by S-methyl-L-cysteine sulfoxide in vitro, via the formation of a covalently bound cysteine at the active site Cys-134. Its function is as follows. Catalyzes the NADPH-dependent formation of L-aspartate-semialdehyde (L-ASA) by the reductive dephosphorylation of L-aspartyl-4-phosphate. This Vibrio cholerae serotype O1 (strain ATCC 39315 / El Tor Inaba N16961) protein is Aspartate-semialdehyde dehydrogenase 1 (asd1).